A 557-amino-acid chain; its full sequence is Arginine--tRNA ligase (557 aa).

Residues A132–H142 carry the 'HIGH' region motif.

It belongs to the class-I aminoacyl-tRNA synthetase family. In terms of assembly, monomer.

It is found in the cytoplasm. It catalyses the reaction tRNA(Arg) + L-arginine + ATP = L-arginyl-tRNA(Arg) + AMP + diphosphate. The sequence is that of Arginine--tRNA ligase from Bacillus pumilus (strain SAFR-032).